The sequence spans 155 residues: DNA gyrase inhibitor (155 aa).

Belongs to the DNA gyrase inhibitor family. Interacts with DNA gyrase.

The protein localises to the cytoplasm. Functionally, inhibits the supercoiling activity of DNA gyrase. Acts by inhibiting DNA gyrase at an early step, prior to (or at the step of) binding of DNA by the gyrase. It protects cells against toxins that target DNA gyrase, by inhibiting activity of these toxins and reducing the formation of lethal double-strand breaks in the cell. The sequence is that of DNA gyrase inhibitor from Edwardsiella ictaluri (strain 93-146).